The chain runs to 369 residues: RNA pseudouridine synthase 5 (369 aa).

The 58-residue stretch at 47 to 104 (APLLGWIQRIQNGQIQIDGEVVKDPNTLLRSGSKLVYSRLPWKEPDTPYSLEVLYEDD) folds into the S4 RNA-binding domain.

It belongs to the pseudouridine synthase RluA family.

The enzyme catalyses a uridine in RNA = a pseudouridine in RNA. The sequence is that of RNA pseudouridine synthase 5 from Arabidopsis thaliana (Mouse-ear cress).